We begin with the raw amino-acid sequence, 443 residues long: Zinc finger protein 713 (443 aa).

Over residues 1–10 (MPSQNAVFSQ) the composition is skewed to polar residues. Disordered regions lie at residues 1–23 (MPSQ…NDGS) and 99–118 (DTHP…TSQN). One can recognise a KRAB domain in the interval 32–102 (LTFQDVAVDF…ERDSLLDTHP (71 aa)). Over residues 99 to 112 (DTHPDGENRPEIKK) the composition is skewed to basic and acidic residues. The C2H2-type 1; degenerate zinc finger occupies 255–280 (HTAEKPSECGKAFSHTSSLSQPQMLL). 5 consecutive C2H2-type zinc fingers follow at residues 286–308 (YKCD…QRIH), 314–336 (FICN…LRIH), 342–364 (YKCN…HRLH), 370–392 (YECG…ERTH), and 398–420 (YKCN…RKIH).

It belongs to the krueppel C2H2-type zinc-finger protein family. As to expression, expressed in fetal and adult brain.

Its subcellular location is the nucleus. In terms of biological role, may be involved in transcriptional regulation. This chain is Zinc finger protein 713, found in Homo sapiens (Human).